The following is a 508-amino-acid chain: Phenylalanine--tRNA ligase alpha subunit (508 aa).

Alanine 2 carries the N-acetylalanine modification. Phosphoserine occurs at positions 193 and 301. Lysine 311 bears the N6-acetyllysine mark. L-phenylalanine contacts are provided by residues threonine 329, 372 to 374 (QIE), and tyrosine 412. Glutamate 414 contributes to the Mg(2+) binding site. Phenylalanine 438 is an L-phenylalanine binding site.

It belongs to the class-II aminoacyl-tRNA synthetase family. Phe-tRNA synthetase alpha subunit type 2 subfamily. Heterotetramer; dimer of two heterodimers formed by FARSA and FARSB. It depends on Mg(2+) as a cofactor.

The protein resides in the cytoplasm. The catalysed reaction is tRNA(Phe) + L-phenylalanine + ATP = L-phenylalanyl-tRNA(Phe) + AMP + diphosphate + H(+). This is Phenylalanine--tRNA ligase alpha subunit (Farsa) from Mus musculus (Mouse).